The primary structure comprises 120 residues: MDQLIQLVEATQSRTDFPVINPGDTVRIQLKVIEGEKERLQAYEGVVISDRGAGASKTITVRKISHGVGVERIIPVNSPNVESVTVLKHGKARRAKLFYLRKRTGKAALKVKERKFPVKA.

It belongs to the bacterial ribosomal protein bL19 family.

In terms of biological role, this protein is located at the 30S-50S ribosomal subunit interface and may play a role in the structure and function of the aminoacyl-tRNA binding site. This is Large ribosomal subunit protein bL19 from Chlorobium limicola (strain DSM 245 / NBRC 103803 / 6330).